Here is a 1119-residue protein sequence, read N- to C-terminus: Translation initiation factor IF-2 (1119 aa).

Disordered regions lie at residues 64 to 463 (SIKK…TSGY) and 477 to 507 (RPKKEKSDESKSQKTIKQFKKKKKETTRQRQ). Over residues 70 to 102 (IKKDNYKQNKEDKSSLISSVEEKPFKDNPEKKP) the composition is skewed to basic and acidic residues. Polar residues-rich tracts occupy residues 116 to 153 (IISNQPKSLNKPTITNSSQSQANLTNQNLNSKTSQNLN) and 182 to 212 (KNTTKNVQSNESSQNILNSGGGRQISNKPDQ). Positions 213 to 224 (NSSKSKTKNINN) are enriched in low complexity. Polar residues-rich tracts occupy residues 242-257 (NKQNNKQKTSFKQTVP), 281-297 (FNRQTNTNRPGAPSSNK), 319-328 (FNRQVNTNRS), and 375-387 (QVINNNEKQNSET). Basic and acidic residues predominate over residues 421–435 (GKTDWDDSAKLEALR). Positions 493-507 (KQFKKKKKETTRQRQ) are enriched in basic residues. Positions 610–782 (KRPPVITVMG…ILLVSEVEDL (173 aa)) constitute a tr-type G domain. Residues 619-626 (GHVDHGKT) form a G1 region. 619-626 (GHVDHGKT) is a binding site for GTP. The tract at residues 644 to 648 (GITQH) is G2. The segment at 669 to 672 (DTPG) is G3. GTP is bound by residues 669–673 (DTPGH) and 723–726 (NKID). The tract at residues 723-726 (NKID) is G4. The interval 759–761 (SAI) is G5.

Belongs to the TRAFAC class translation factor GTPase superfamily. Classic translation factor GTPase family. IF-2 subfamily.

It is found in the cytoplasm. Functionally, one of the essential components for the initiation of protein synthesis. Protects formylmethionyl-tRNA from spontaneous hydrolysis and promotes its binding to the 30S ribosomal subunits. Also involved in the hydrolysis of GTP during the formation of the 70S ribosomal complex. The chain is Translation initiation factor IF-2 from Prochlorococcus marinus (strain MIT 9215).